A 525-amino-acid chain; its full sequence is tRNA-splicing endonuclease subunit Sen54 (525 aa).

The residue at position 1 (Met1) is an N-acetylmethionine. The disordered stretch occupies residues 1–46; sequence MEPEPEPGSVEVPAGRVLSASELRAARSRSQKLPQRSHGPKDFLPD. A compositionally biased stretch (low complexity) spans 7-23; it reads PGSVEVPAGRVLSASEL. At Ser178 the chain carries Phosphoserine. Tyr180 carries the post-translational modification Phosphotyrosine. Low complexity predominate over residues 220 to 232; that stretch reads LPPVSLAASSSPA. The disordered stretch occupies residues 220-273; sequence LPPVSLAASSSPACDQSSQYPEEKSQDSSPRQGSELPLQFLGSSEPCSDLARED.

Belongs to the SEN54 family. As to quaternary structure, tRNA splicing endonuclease is a heterotetramer composed of TSEN2, TSEN15, TSEN34/LENG5 and TSEN54. tRNA splicing endonuclease complex also contains proteins of the pre-mRNA 3'-end processing machinery such as CLP1, CPSF1, CPSF4 and CSTF2.

The protein localises to the nucleus. Its subcellular location is the nucleolus. Functionally, non-catalytic subunit of the tRNA-splicing endonuclease complex, a complex responsible for identification and cleavage of the splice sites in pre-tRNA. It cleaves pre-tRNA at the 5' and 3' splice sites to release the intron. The products are an intron and two tRNA half-molecules bearing 2',3' cyclic phosphate and 5'-OH termini. There are no conserved sequences at the splice sites, but the intron is invariably located at the same site in the gene, placing the splice sites an invariant distance from the constant structural features of the tRNA body. The tRNA splicing endonuclease is also involved in mRNA processing via its association with pre-mRNA 3'-end processing factors, establishing a link between pre-tRNA splicing and pre-mRNA 3'-end formation, suggesting that the endonuclease subunits function in multiple RNA-processing events. This Mus musculus (Mouse) protein is tRNA-splicing endonuclease subunit Sen54 (Tsen54).